A 488-amino-acid chain; its full sequence is N-succinylglutamate 5-semialdehyde dehydrogenase (488 aa).

Gly221–Gly226 contacts NAD(+). Catalysis depends on residues Glu244 and Cys278.

It belongs to the aldehyde dehydrogenase family. AstD subfamily.

The enzyme catalyses N-succinyl-L-glutamate 5-semialdehyde + NAD(+) + H2O = N-succinyl-L-glutamate + NADH + 2 H(+). Its pathway is amino-acid degradation; L-arginine degradation via AST pathway; L-glutamate and succinate from L-arginine: step 4/5. In terms of biological role, catalyzes the NAD-dependent reduction of succinylglutamate semialdehyde into succinylglutamate. The sequence is that of N-succinylglutamate 5-semialdehyde dehydrogenase from Pseudomonas syringae pv. syringae (strain B728a).